The primary structure comprises 123 residues: Large ribosomal subunit protein uL14 (123 aa).

The protein belongs to the universal ribosomal protein uL14 family. In terms of assembly, part of the 50S ribosomal subunit. Forms a cluster with proteins L3 and L19. In the 70S ribosome, L14 and L19 interact and together make contacts with the 16S rRNA in bridges B5 and B8.

In terms of biological role, binds to 23S rRNA. Forms part of two intersubunit bridges in the 70S ribosome. The chain is Large ribosomal subunit protein uL14 from Buchnera aphidicola subsp. Acyrthosiphon kondoi (Acyrthosiphon kondoi symbiotic bacterium).